The chain runs to 432 residues: Adenylosuccinate synthetase (432 aa).

GTP is bound by residues 12–18 and 40–42; these read GDEGKGK and GHT. The Proton acceptor role is filled by D13. Residues D13 and G40 each coordinate Mg(2+). IMP is bound by residues 13–16, 38–41, T129, R143, Q224, T239, and R303; these read DEGK and NAGH. H41 functions as the Proton donor in the catalytic mechanism. 299-305 serves as a coordination point for substrate; the sequence is VTTGRRR. Residues R305, 331-333, and 413-415 contribute to the GTP site; these read KLD and GVG.

Belongs to the adenylosuccinate synthetase family. In terms of assembly, homodimer. Requires Mg(2+) as cofactor.

It is found in the cytoplasm. The catalysed reaction is IMP + L-aspartate + GTP = N(6)-(1,2-dicarboxyethyl)-AMP + GDP + phosphate + 2 H(+). It functions in the pathway purine metabolism; AMP biosynthesis via de novo pathway; AMP from IMP: step 1/2. Plays an important role in the de novo pathway of purine nucleotide biosynthesis. Catalyzes the first committed step in the biosynthesis of AMP from IMP. The sequence is that of Adenylosuccinate synthetase from Mycobacterium avium (strain 104).